The chain runs to 118 residues: Cytochrome c oxidase assembly protein COX20, mitochondrial (118 aa).

The residue at position 2 (alanine 2) is an N-acetylalanine. The Mitochondrial intermembrane portion of the chain corresponds to 2 to 33 (AAPPEPGEPEERKSLKLLGFLDVENTPCARHS). Residues 34–51 (ILYGSLGSVVAGFGHFLF) form a helical membrane-spanning segment. At 52-60 (TSRIRRSCD) the chain is on the mitochondrial matrix side. A helical transmembrane segment spans residues 61–77 (VGVGGFILVTLGCWFHC). Over 78–118 (RYNYAKQRIQERIAREEIKKKILYEGTHLDPERKHNGSSSN) the chain is Mitochondrial intermembrane.

Belongs to the COX20 family. In terms of assembly, found in a complex with TMEM177, COA6, MT-CO2/COX2, COX18, SCO1 and SCO2. Interacts with SCO1, SCO2 and COA6 in a MT-CO2/COX2- and COX18-dependent manner. Interacts with COX18 in a MT-CO2/COX2-dependent manner. Interacts with MT-CO2/COX2. Interacts with TMEM177.

The protein localises to the mitochondrion inner membrane. Its function is as follows. Essential for the assembly of the mitochondrial respiratory chain complex IV (CIV), also known as cytochrome c oxidase. Acts as a chaperone in the early steps of cytochrome c oxidase subunit II (MT-CO2/COX2) maturation, stabilizing the newly synthesized protein and presenting it to metallochaperones SCO1/2 which in turn facilitates the incorporation of the mature MT-CO2/COX2 into the assembling CIV holoenzyme. The chain is Cytochrome c oxidase assembly protein COX20, mitochondrial (COX20) from Homo sapiens (Human).